A 943-amino-acid polypeptide reads, in one-letter code: Translation initiation factor IF-2 (943 aa).

Residues 35 to 359 (MSSIDQDQEA…MPQRKERPLP (325 aa)) are disordered. Residues 57-76 (KAPSSQAAKTPAKAAKTSSA) show a composition bias toward low complexity. 2 stretches are compositionally biased toward basic and acidic residues: residues 92-103 (SNDHADAAEHSQ) and 110-124 (AKQE…KTSD). The segment covering 130-141 (SKSTILRPRSTQ) has biased composition (polar residues). Low complexity predominate over residues 142 to 190 (TAHTNTNHNRGGNTASANNTANGRNSNRSNNNNNNRSANNANRSGNNNR). 3 stretches are compositionally biased toward basic and acidic residues: residues 191–205 (SNER…RFDN), 239–250 (ASERQQPKRQEA), and 259–271 (KRSE…RPRT). 2 stretches are compositionally biased toward low complexity: residues 289–299 (PAAAAPKPASA) and 315–330 (NFGR…GFNR). Positions 331–342 (NNRRNKKNKRRQ) are enriched in basic residues. A compositionally biased stretch (basic and acidic residues) spans 346-358 (PKKEMPQRKERPL). The tr-type G domain maps to 444–613 (PRPPVVTIMG…LLEADVLELK (170 aa)). The G1 stretch occupies residues 453 to 460 (GHVDHGKT). 453 to 460 (GHVDHGKT) serves as a coordination point for GTP. The interval 478–482 (GITQH) is G2. The interval 499 to 502 (DTPG) is G3. GTP is bound by residues 499-503 (DTPGH) and 553-556 (NKID). The segment at 553 to 556 (NKID) is G4. Positions 589–591 (SAK) are G5.

It belongs to the TRAFAC class translation factor GTPase superfamily. Classic translation factor GTPase family. IF-2 subfamily.

The protein localises to the cytoplasm. One of the essential components for the initiation of protein synthesis. Protects formylmethionyl-tRNA from spontaneous hydrolysis and promotes its binding to the 30S ribosomal subunits. Also involved in the hydrolysis of GTP during the formation of the 70S ribosomal complex. The sequence is that of Translation initiation factor IF-2 from Lacticaseibacillus paracasei (strain ATCC 334 / BCRC 17002 / CCUG 31169 / CIP 107868 / KCTC 3260 / NRRL B-441) (Lactobacillus paracasei).